A 138-amino-acid polypeptide reads, in one-letter code: Transcription antitermination protein NusB (138 aa).

This sequence belongs to the NusB family.

In terms of biological role, involved in transcription antitermination. Required for transcription of ribosomal RNA (rRNA) genes. Binds specifically to the boxA antiterminator sequence of the ribosomal RNA (rrn) operons. This Limosilactobacillus reuteri (strain DSM 20016) (Lactobacillus reuteri) protein is Transcription antitermination protein NusB.